The sequence spans 255 residues: Staphylococcal secretory antigen ssaA1 (255 aa).

A signal peptide spans 1–26; the sequence is MKKIVTATIATAGLATIAFAGHDAQA. 3 consecutive repeat copies span residues 75-78, 88-91, and 98-101. A 3 X 4 AA repeats of Y-N-N-Y region spans residues 75-101; the sequence is YNNYNTYSYNNASYNNYYNHSYQYNNY. Residues 134 to 255 enclose the Peptidase C51 domain; that stretch reads AAPSSNGRSI…NQAGSYNFIH (122 aa).

Its subcellular location is the secreted. Functionally, not known; immunogenic protein. The chain is Staphylococcal secretory antigen ssaA1 (ssaA1) from Staphylococcus aureus (strain MW2).